The primary structure comprises 399 residues: Elongation factor Tu (399 aa).

The 195-residue stretch at 10–204 folds into the tr-type G domain; that stretch reads KPHVNIGTIG…AVDSSIPEPE (195 aa). The segment at 19-26 is G1; the sequence is GHVDHGKT. Position 19–26 (19–26) interacts with GTP; the sequence is GHVDHGKT. Position 26 (Thr-26) interacts with Mg(2+). The G2 stretch occupies residues 60 to 64; sequence GITIN. A G3 region spans residues 81 to 84; the sequence is DCPG. Residues 81-85 and 136-139 each bind GTP; these read DCPGH and NKCD. Residues 136 to 139 form a G4 region; that stretch reads NKCD. Residues 174-176 are G5; sequence SGL.

It belongs to the TRAFAC class translation factor GTPase superfamily. Classic translation factor GTPase family. EF-Tu/EF-1A subfamily. Monomer.

The protein resides in the cytoplasm. It carries out the reaction GTP + H2O = GDP + phosphate + H(+). GTP hydrolase that promotes the GTP-dependent binding of aminoacyl-tRNA to the A-site of ribosomes during protein biosynthesis. The polypeptide is Elongation factor Tu (Synechococcus sp. (strain CC9605)).